The chain runs to 250 residues: Homeobox protein Dlx4a (250 aa).

Positions 123 to 182 (IRKPRTIYSSLQLQALNQRFQQTQYLALPERADLAAKLGLTQTQVKIWFQNKRSKYKKIM) form a DNA-binding region, homeobox. Residues 182 to 202 (MKHGSSGPEGEHLQAASASGA) form a disordered region.

Belongs to the distal-less homeobox family.

The protein resides in the nucleus. The chain is Homeobox protein Dlx4a (dlx4a) from Danio rerio (Zebrafish).